We begin with the raw amino-acid sequence, 359 residues long: Histidinol-phosphate aminotransferase (359 aa).

Lys217 is subject to N6-(pyridoxal phosphate)lysine.

Belongs to the class-II pyridoxal-phosphate-dependent aminotransferase family. Histidinol-phosphate aminotransferase subfamily. In terms of assembly, homodimer. It depends on pyridoxal 5'-phosphate as a cofactor.

It catalyses the reaction L-histidinol phosphate + 2-oxoglutarate = 3-(imidazol-4-yl)-2-oxopropyl phosphate + L-glutamate. It functions in the pathway amino-acid biosynthesis; L-histidine biosynthesis; L-histidine from 5-phospho-alpha-D-ribose 1-diphosphate: step 7/9. This is Histidinol-phosphate aminotransferase from Salmonella choleraesuis (strain SC-B67).